A 249-amino-acid chain; its full sequence is Beta-crystallin B1 (249 aa).

A disordered region spans residues 1–49 (MSQPAVKASATAAVNPGPDGKGKGAPPPGPAPGSGPAQAPAQPMPAAKG). N-acetylserine is present on S2. The segment at 2–55 (SQPAVKASATAAVNPGPDGKGKGAPPPGPAPGSGPAQAPAQPMPAAKGDLPPGS) is N-terminal arm. Residues 34 to 49 (SGPAQAPAQPMPAAKG) are compositionally biased toward low complexity. 2 Beta/gamma crystallin 'Greek key' domains span residues 56–95 (YKLVVFEQENFQGRRVEFSGECLNLGDRGFDRVRSIIVTS) and 96–140 (GPWV…RPIR). Residues 141 to 145 (MDAQE) are connecting peptide. Beta/gamma crystallin 'Greek key' domains lie at 146–187 (HKLC…RVSS) and 188–230 (GTWV…RRLR). The segment at 232-249 (RQWHREGCFPVLAAEPPK) is C-terminal arm.

The protein belongs to the beta/gamma-crystallin family. In terms of assembly, homo/heterodimer, or complexes of higher-order. The structure of beta-crystallin oligomers seems to be stabilized through interactions between the N-terminal arms. In terms of processing, specific cleavages in the N-terminal arm occur during lens maturation and give rise to truncated forms, leading to impaired oligomerization and protein insolubilization.

Crystallins are the dominant structural components of the vertebrate eye lens. The sequence is that of Beta-crystallin B1 (CRYBB1) from Sus scrofa (Pig).